Consider the following 157-residue polypeptide: Glycine-rich RNA-binding protein (157 aa).

Residues 6–84 enclose the RRM domain; the sequence is YRCFVGGLAW…RNITVNEAQS (79 aa). Residues 70-157 are disordered; sequence QELDGRNITV…YGGGGGGSRW (88 aa). 2 stretches are compositionally biased toward gly residues: residues 86–138 and 145–157; these read GSGG…GGYG and DGGYGGGGGGSRW.

Its function is as follows. May play a role in the biosynthesis and processing of heterogeneous nuclear RNA and in the maturation of specific mRNAs in response to wounding. This is Glycine-rich RNA-binding protein from Daucus carota (Wild carrot).